A 349-amino-acid polypeptide reads, in one-letter code: Sphingolipid C4-hydroxylase SUR2 (349 aa).

Transmembrane regions (helical) follow at residues 9-29 (AAGS…MHYA), 50-70 (VLAL…FHVI), 99-119 (FLEV…FMHF), 148-168 (IYYG…FLFV), and 209-229 (PVEG…LTHL). Residues 162-297 (FAGFLFVDTW…FTFWDNLFQT (136 aa)) form the Fatty acid hydroxylase domain.

The protein belongs to the sterol desaturase family.

The protein resides in the endoplasmic reticulum membrane. The enzyme catalyses sphinganine + 2 Fe(II)-[cytochrome b5] + O2 + 2 H(+) = (4R)-hydroxysphinganine + 2 Fe(III)-[cytochrome b5] + H2O. It catalyses the reaction an N-acylsphinganine + 2 Fe(II)-[cytochrome b5] + O2 + 2 H(+) = an N-acyl-(4R)-4-hydroxysphinganine + 2 Fe(III)-[cytochrome b5] + H2O. The catalysed reaction is an N-acyleicosasphinganine + 2 Fe(II)-[cytochrome b5] + O2 + 2 H(+) = N-acyl-4-hydroxyeicosasphinganine + 2 Fe(III)-[cytochrome b5] + H2O. Its pathway is membrane lipid metabolism; sphingolipid biosynthesis. Its function is as follows. Required for hydroxylation of C-4 in the sphingoid moiety of ceramide. Catalyzes the conversion of sphinganine to phytosphingosine in sphingolipid biosynthesis. Involved in the response to syringomycin. This Saccharomyces cerevisiae (strain ATCC 204508 / S288c) (Baker's yeast) protein is Sphingolipid C4-hydroxylase SUR2 (SUR2).